Here is a 304-residue protein sequence, read N- to C-terminus: MIQSTEFFWWKFELVFPPDVEESFLWFLNMAGIKSYAIERSPDNLQDQTLMVWLPSHEWLKKDREEFENSLLALNKAFREDVLNTKWEKIIDEDWSSSWKKFWKADPVGSKILILPSWLELPDIYSNRIVIKLDPGSAFGTGSHPTTRLCLEDLERNPPLGKKVVDIGCGSGVLGIAAIKLGAKEVRAIDIDSLAVRATSENIVLNNLSQKQLSVSLGSIENLANQLNPLSADLLICNTLSPVIKELAPYFFKLTHSYSRLCLSGLLVAQVEDITNFLSILGWELIDSYSSDNWALIRLCRNHP.

Residues threonine 147, glycine 168, aspartate 190, and asparagine 238 each coordinate S-adenosyl-L-methionine.

This sequence belongs to the methyltransferase superfamily. PrmA family.

The protein localises to the cytoplasm. The enzyme catalyses L-lysyl-[protein] + 3 S-adenosyl-L-methionine = N(6),N(6),N(6)-trimethyl-L-lysyl-[protein] + 3 S-adenosyl-L-homocysteine + 3 H(+). In terms of biological role, methylates ribosomal protein L11. This is Ribosomal protein L11 methyltransferase from Prochlorococcus marinus (strain SARG / CCMP1375 / SS120).